A 525-amino-acid polypeptide reads, in one-letter code: Cytochrome P450 4V2 (525 aa).

Residues 13-33 form a helical membrane-spanning segment; the sequence is LLLWGAASALSLAGASLVLSL. Positions 329 and 467 each coordinate heme.

It belongs to the cytochrome P450 family. The cofactor is heme. Broadly expressed. Detected in heart, brain, placenta, lung, liver, skeletal muscle, kidney, pancreas, retina, retinal pigment epithelium (RPE) and lymphocytes.

It is found in the endoplasmic reticulum membrane. It carries out the reaction dodecanoate + reduced [NADPH--hemoprotein reductase] + O2 = 12-hydroxydodecanoate + oxidized [NADPH--hemoprotein reductase] + H2O + H(+). The enzyme catalyses tetradecanoate + reduced [NADPH--hemoprotein reductase] + O2 = 14-hydroxytetradecanoate + oxidized [NADPH--hemoprotein reductase] + H2O + H(+). It catalyses the reaction hexadecanoate + reduced [NADPH--hemoprotein reductase] + O2 = 16-hydroxyhexadecanoate + oxidized [NADPH--hemoprotein reductase] + H2O + H(+). The catalysed reaction is (5Z,8Z,11Z,14Z,17Z)-eicosapentaenoate + reduced [NADPH--hemoprotein reductase] + O2 = 20-hydroxy-(5Z,8Z,11Z,14Z,17Z)-eicosapentaenoate + oxidized [NADPH--hemoprotein reductase] + H2O + H(+). It carries out the reaction (4Z,7Z,10Z,13Z,16Z,19Z)-docosahexaenoate + reduced [NADPH--hemoprotein reductase] + O2 = 22-hydroxy-(4Z,7Z,10Z,13Z,16Z,19Z)-docosahexaenoate + oxidized [NADPH--hemoprotein reductase] + H2O + H(+). Its pathway is lipid metabolism; fatty acid metabolism. Inhibited by N-hydroxy-N'-(4-n-butyl-2-methylphenyl formamidine)(HET0016) with an IC(50) of 38 nM. In terms of biological role, a cytochrome P450 monooxygenase involved in fatty acid metabolism in the eye. Catalyzes the omega-hydroxylation of polyunsaturated fatty acids (PUFAs) docosahexaenoate (DHA) and its precursor eicosapentaenoate (EPA), and may contribute to the homeostasis of these retinal PUFAs. Omega hydroxylates saturated fatty acids such as laurate, myristate and palmitate, the catalytic efficiency decreasing in the following order: myristate &gt; laurate &gt; palmitate (C14&gt;C12&gt;C16). Mechanistically, uses molecular oxygen inserting one oxygen atom into a substrate, and reducing the second into a water molecule, with two electrons provided by NADPH via cytochrome P450 reductase (CPR; NADPH-ferrihemoprotein reductase). The protein is Cytochrome P450 4V2 (CYP4V2) of Homo sapiens (Human).